We begin with the raw amino-acid sequence, 187 residues long: ATP synthase subunit delta, chloroplastic (187 aa).

This sequence belongs to the ATPase delta chain family. In terms of assembly, F-type ATPases have 2 components, F(1) - the catalytic core - and F(0) - the membrane proton channel. F(1) has five subunits: alpha(3), beta(3), gamma(1), delta(1), epsilon(1). CF(0) has four main subunits: a(1), b(1), b'(1) and c(10-14). The alpha and beta chains form an alternating ring which encloses part of the gamma chain. F(1) is attached to F(0) by a central stalk formed by the gamma and epsilon chains, while a peripheral stalk is formed by the delta, b and b' chains.

It is found in the plastid. Its subcellular location is the chloroplast thylakoid membrane. Functionally, f(1)F(0) ATP synthase produces ATP from ADP in the presence of a proton or sodium gradient. F-type ATPases consist of two structural domains, F(1) containing the extramembraneous catalytic core and F(0) containing the membrane proton channel, linked together by a central stalk and a peripheral stalk. During catalysis, ATP synthesis in the catalytic domain of F(1) is coupled via a rotary mechanism of the central stalk subunits to proton translocation. This protein is part of the stalk that links CF(0) to CF(1). It either transmits conformational changes from CF(0) to CF(1) or is implicated in proton conduction. The protein is ATP synthase subunit delta, chloroplastic of Thalassiosira pseudonana (Marine diatom).